The sequence spans 414 residues: Autophagy-related protein 18 (414 aa).

4 WD repeats span residues 1–36 (MAMN…KSYE), 69–114 (KRQS…LLYT), 185–225 (AHRS…KLYQ), and 230–269 (SIPS…SSRE). A L/FRRG motif motif is present at residues 226–230 (FRRGS). Residues 261–314 (LSHQTSSREGSPSSALSRERAASQSSLGTSPDPDDPTDDMESSEIASRKHNGTL) form a disordered region. A compositionally biased stretch (polar residues) spans 262 to 289 (SHQTSSREGSPSSALSRERAASQSSLGT). Residues 292-302 (DPDDPTDDMES) show a composition bias toward acidic residues. 2 WD repeats span residues 309–355 (KHNG…AWIK) and 367–407 (GNAG…GGEG).

Belongs to the WD repeat PROPPIN family. Component of the PI(3,5)P2 regulatory complex.

It is found in the preautophagosomal structure membrane. The protein resides in the vacuole membrane. The protein localises to the endosome membrane. Its function is as follows. The PI(3,5)P2 regulatory complex regulates both the synthesis and turnover of phosphatidylinositol 3,5-bisphosphate (PtdIns(3,5)P2). Necessary for proper vacuole morphology. Plays an important role in osmotically-induced vacuole fragmentation. Required for cytoplasm to vacuole transport (Cvt) vesicle formation, pexophagy and starvation-induced autophagy. Involved in correct atg9 trafficking to the pre-autophagosomal structure. Might also be involved in premeiotic DNA replication. The sequence is that of Autophagy-related protein 18 (atg18) from Aspergillus terreus (strain NIH 2624 / FGSC A1156).